We begin with the raw amino-acid sequence, 864 residues long: Eukaryotic translation initiation factor 3 subunit C (864 aa).

The disordered stretch occupies residues 1–77 (MSRFFARGGS…EESEDEERVT (77 aa)). Residues 14–54 (SSSEDEQELYSDREEEEQFSDSEEESSEAESSEEESSDDEG) show a composition bias toward acidic residues. The 175-residue stretch at 602–776 (FHMHINLELL…NAIVFRKGVE (175 aa)) folds into the PCI domain. The interval 815 to 864 (RDQGAGARGGRGAGRGGQARGGPRFPGGQQGRRPGGQQFSGGALGGAIKA) is disordered. Gly residues predominate over residues 820–864 (GARGGRGAGRGGQARGGPRFPGGQQGRRPGGQQFSGGALGGAIKA).

This sequence belongs to the eIF-3 subunit C family. In terms of assembly, component of the eukaryotic translation initiation factor 3 (eIF-3) complex.

The protein resides in the cytoplasm. Its function is as follows. Component of the eukaryotic translation initiation factor 3 (eIF-3) complex, which is involved in protein synthesis of a specialized repertoire of mRNAs and, together with other initiation factors, stimulates binding of mRNA and methionyl-tRNAi to the 40S ribosome. The eIF-3 complex specifically targets and initiates translation of a subset of mRNAs involved in cell proliferation. In Aspergillus terreus (strain NIH 2624 / FGSC A1156), this protein is Eukaryotic translation initiation factor 3 subunit C (nip1).